The primary structure comprises 88 residues: Small ribosomal subunit protein uS12 (88 aa).

The disordered stretch occupies residues 1 to 24 (RKGRRDKIGKVKTAALKGSPQRRG). At D81 the chain carries 3-methylthioaspartic acid.

This sequence belongs to the universal ribosomal protein uS12 family. Part of the 30S ribosomal subunit. Contacts proteins S8 and S17. May interact with IF1 in the 30S initiation complex.

Its function is as follows. With S4 and S5 plays an important role in translational accuracy. Interacts with and stabilizes bases of the 16S rRNA that are involved in tRNA selection in the A site and with the mRNA backbone. Located at the interface of the 30S and 50S subunits, it traverses the body of the 30S subunit contacting proteins on the other side and probably holding the rRNA structure together. The combined cluster of proteins S8, S12 and S17 appears to hold together the shoulder and platform of the 30S subunit. The chain is Small ribosomal subunit protein uS12 (rpsL) from Mycobacterium szulgai.